Consider the following 101-residue polypeptide: Small ribosomal subunit protein uS14 (101 aa).

The protein belongs to the universal ribosomal protein uS14 family. Part of the 30S ribosomal subunit. Contacts proteins S3 and S10.

Its function is as follows. Binds 16S rRNA, required for the assembly of 30S particles and may also be responsible for determining the conformation of the 16S rRNA at the A site. The sequence is that of Small ribosomal subunit protein uS14 from Tropheryma whipplei (strain TW08/27) (Whipple's bacillus).